Here is a 357-residue protein sequence, read N- to C-terminus: Probable protein phosphatase 2C 60 (357 aa).

The region spanning 23-329 (RYGLSSMQGW…DNMTMILVRF (307 aa)) is the PPM-type phosphatase domain. The Mn(2+) site is built by D57, G58, D272, and D320. Residues 331 to 357 (NPTPSETELKPEASQAEGNHDEPSSSN) are disordered. Over residues 348 to 357 (GNHDEPSSSN) the composition is skewed to basic and acidic residues.

The protein belongs to the PP2C family. Mg(2+) is required as a cofactor. It depends on Mn(2+) as a cofactor.

The enzyme catalyses O-phospho-L-seryl-[protein] + H2O = L-seryl-[protein] + phosphate. The catalysed reaction is O-phospho-L-threonyl-[protein] + H2O = L-threonyl-[protein] + phosphate. The polypeptide is Probable protein phosphatase 2C 60 (Arabidopsis thaliana (Mouse-ear cress)).